Reading from the N-terminus, the 430-residue chain is tRNA(Ile)-lysidine synthase (430 aa).

21–26 (SGGLDS) lines the ATP pocket.

It belongs to the tRNA(Ile)-lysidine synthase family.

It is found in the cytoplasm. It carries out the reaction cytidine(34) in tRNA(Ile2) + L-lysine + ATP = lysidine(34) in tRNA(Ile2) + AMP + diphosphate + H(+). Ligates lysine onto the cytidine present at position 34 of the AUA codon-specific tRNA(Ile) that contains the anticodon CAU, in an ATP-dependent manner. Cytidine is converted to lysidine, thus changing the amino acid specificity of the tRNA from methionine to isoleucine. The chain is tRNA(Ile)-lysidine synthase from Salmonella dublin (strain CT_02021853).